We begin with the raw amino-acid sequence, 1102 residues long: DNA-directed RNA polymerase subunit beta (1102 aa).

The segment at 1081–1102 is disordered; it reads LPGKRTPSRPIYESLSTEGNQD.

It belongs to the RNA polymerase beta chain family. As to quaternary structure, in cyanobacteria the RNAP catalytic core is composed of 2 alpha, 1 beta, 1 beta', 1 gamma and 1 omega subunit. When a sigma factor is associated with the core the holoenzyme is formed, which can initiate transcription.

It catalyses the reaction RNA(n) + a ribonucleoside 5'-triphosphate = RNA(n+1) + diphosphate. DNA-dependent RNA polymerase catalyzes the transcription of DNA into RNA using the four ribonucleoside triphosphates as substrates. The polypeptide is DNA-directed RNA polymerase subunit beta (Trichodesmium erythraeum (strain IMS101)).